Consider the following 436-residue polypeptide: Arginine biosynthesis bifunctional protein ArgJ, mitochondrial (436 aa).

Substrate is bound by residues threonine 172, lysine 198, threonine 209, glutamate 298, asparagine 431, and serine 436. Threonine 209 functions as the Nucleophile in the catalytic mechanism.

It belongs to the ArgJ family. Heterodimer of an alpha and a beta chain. In terms of processing, the alpha and beta chains are autoproteolytically processed from a single precursor protein within the mitochondrion.

It localises to the mitochondrion matrix. It catalyses the reaction N(2)-acetyl-L-ornithine + L-glutamate = N-acetyl-L-glutamate + L-ornithine. The enzyme catalyses L-glutamate + acetyl-CoA = N-acetyl-L-glutamate + CoA + H(+). It functions in the pathway amino-acid biosynthesis; L-arginine biosynthesis; L-ornithine and N-acetyl-L-glutamate from L-glutamate and N(2)-acetyl-L-ornithine (cyclic): step 1/1. Its pathway is amino-acid biosynthesis; L-arginine biosynthesis; N(2)-acetyl-L-ornithine from L-glutamate: step 1/4. Catalyzes two activities which are involved in the cyclic version of arginine biosynthesis: the synthesis of acetylglutamate from glutamate and acetyl-CoA, and of ornithine by transacetylation between acetylornithine and glutamate. The polypeptide is Arginine biosynthesis bifunctional protein ArgJ, mitochondrial (Meyerozyma guilliermondii (strain ATCC 6260 / CBS 566 / DSM 6381 / JCM 1539 / NBRC 10279 / NRRL Y-324) (Yeast)).